Consider the following 165-residue polypeptide: K(+)/H(+) antiporter subunit KhtT (165 aa).

The region spanning 76–161 (LESIEMAFSD…LKKLIHDFLS (86 aa)) is the RCK C-terminal domain.

As to quaternary structure, the transporter is composed of the integral membrane protein KhtU and the regulatory protein KhtT.

It is found in the cell membrane. Its activity is regulated as follows. Binds cyclic di-AMP (c-di-AMP), which may regulate the activity. Functionally, required for activity of the potassium/proton antiporter KhtU. Involved in protection of the cell from methylglyoxal, a toxic by-product of glycolysis. The chain is K(+)/H(+) antiporter subunit KhtT from Bacillus subtilis (strain 168).